Here is a 556-residue protein sequence, read N- to C-terminus: MAHIVQTHKLTLHDVAIDQALVYSSDSNCAELKRTFQVELAHGYNEVKVQNLPFDLVQDSIRVSGAGEAVIHDVSVKNQEGAEFVIPERVLAIKAIFEEKERAKDKVADSRVAVQKRIEGLDNLITEVAKHGKDGAFHFDGRTIESLNALHGFHQDTTVDLRAQIRTLDQDLRKAEEEYARASQDYDNTGYRWRNSAQYASIIVESEAGGAAQLTITYQVNNVSWTPFYDIRVTAGVEAEMHVTYFGKVRQYSGEDWKTVPLVLSTARPAHGVKQLPKLGALEASIVVPEPECNRGGRGGYGGGYAQDSVVMACAAPMMEMGRSRKSMKMSYAAVKSSNIASEFSIGRPATIDDRTDEYKVNIGQFTLDTKLSNVTVPSRNATAFLVANSVNTSDYPLVAGQASIFLDGAFVNKTEFEDAVVSQKFEVSLGVDPNIRIEYKPVRNYQEQSGTVEKINSQVTEKTTAVTNLRPNSVLLTIREQLPRSTDSRIKVHLNTPEAVEVDEASVEPTVGAAITPEKILDYTVQLAPGQSSTFVVKYTTEHPQAEQIRYEEKF.

At Ala2 the chain carries N-acetylalanine.

This chain is Protein F37C4.5, found in Caenorhabditis elegans.